The primary structure comprises 162 residues: Cytochrome c-type biogenesis protein CcmE (162 aa).

The Cytoplasmic segment spans residues 1–8 (MNPVRKKR). Residues 9 to 29 (LIIVLAIVAGVGAAVGLALSA) form a helical; Signal-anchor for type II membrane protein membrane-spanning segment. Over 30–162 (LQQNINLFYT…GETSYNQEGK (133 aa)) the chain is Periplasmic. Heme contacts are provided by His124 and Tyr128. Over residues 139 to 148 (DSGQLKHYEN) the composition is skewed to basic and acidic residues. A disordered region spans residues 139–162 (DSGQLKHYENGKAAGETSYNQEGK).

Belongs to the CcmE/CycJ family.

The protein resides in the cell inner membrane. Functionally, heme chaperone required for the biogenesis of c-type cytochromes. Transiently binds heme delivered by CcmC and transfers the heme to apo-cytochromes in a process facilitated by CcmF and CcmH. The sequence is that of Cytochrome c-type biogenesis protein CcmE from Pseudomonas aeruginosa (strain ATCC 15692 / DSM 22644 / CIP 104116 / JCM 14847 / LMG 12228 / 1C / PRS 101 / PAO1).